Reading from the N-terminus, the 555-residue chain is Glutamine--tRNA ligase (555 aa).

The 'HIGH' region motif lies at Pro34 to His44. ATP is bound by residues Glu35–Asn37 and His41–Ser47. 2 residues coordinate L-glutamine: Asp67 and Tyr212. ATP contacts are provided by residues Thr231, Arg261–Leu262, and Met269–Lys271. Residues Val268–Arg272 carry the 'KMSKS' region motif. Residues Thr317 to Glu324 form an interaction with tRNA region.

This sequence belongs to the class-I aminoacyl-tRNA synthetase family. Monomer.

It is found in the cytoplasm. It catalyses the reaction tRNA(Gln) + L-glutamine + ATP = L-glutaminyl-tRNA(Gln) + AMP + diphosphate. This Citrobacter koseri (strain ATCC BAA-895 / CDC 4225-83 / SGSC4696) protein is Glutamine--tRNA ligase.